Reading from the N-terminus, the 198-residue chain is Probable GTP-binding protein EngB (198 aa).

One can recognise an EngB-type G domain in the interval 22 to 195 (HRNEVAFVGR…IDKLFLEFAT (174 aa)). Residues 30 to 37 (GRSNVGKS), 57 to 61 (GKTRL), 75 to 78 (DLPG), 142 to 145 (TKSD), and 174 to 176 (YSS) contribute to the GTP site. Residues Ser-37 and Thr-59 each coordinate Mg(2+).

This sequence belongs to the TRAFAC class TrmE-Era-EngA-EngB-Septin-like GTPase superfamily. EngB GTPase family. It depends on Mg(2+) as a cofactor.

Functionally, necessary for normal cell division and for the maintenance of normal septation. In Clostridium botulinum (strain Eklund 17B / Type B), this protein is Probable GTP-binding protein EngB.